A 508-amino-acid chain; its full sequence is Glutamate--cysteine ligase, chloroplastic (508 aa).

A chloroplast-targeting transit peptide spans 1–59; that stretch reads MTTIFRLASSSSPSLRHDATPHNFHIRKTSISNTFSFSSKNSLSFKRILTSGGSRRFIV. 2 disulfide bridges follow: cysteine 172–cysteine 392 and cysteine 335–cysteine 350.

The protein belongs to the carboxylate-amine ligase family. Glutamate--cysteine ligase type 2 subfamily. In terms of assembly, homodimer or monomer when oxidized or reduced, respectively. In terms of processing, the Cys-172-Cys-392 disulfide bridge is known to modulate the enzyme activity according to the redox status. The oxidized form constitutes the active enzyme.

The protein resides in the plastid. It localises to the chloroplast. It catalyses the reaction L-cysteine + L-glutamate + ATP = gamma-L-glutamyl-L-cysteine + ADP + phosphate + H(+). It functions in the pathway sulfur metabolism; glutathione biosynthesis; glutathione from L-cysteine and L-glutamate: step 1/2. The polypeptide is Glutamate--cysteine ligase, chloroplastic (GSH1) (Medicago truncatula (Barrel medic)).